Reading from the N-terminus, the 455-residue chain is UDP-N-acetylmuramoylalanine--D-glutamate ligase (455 aa).

117–123 is a binding site for ATP; the sequence is GTNGKTT.

Belongs to the MurCDEF family.

The protein localises to the cytoplasm. It catalyses the reaction UDP-N-acetyl-alpha-D-muramoyl-L-alanine + D-glutamate + ATP = UDP-N-acetyl-alpha-D-muramoyl-L-alanyl-D-glutamate + ADP + phosphate + H(+). It functions in the pathway cell wall biogenesis; peptidoglycan biosynthesis. Cell wall formation. Catalyzes the addition of glutamate to the nucleotide precursor UDP-N-acetylmuramoyl-L-alanine (UMA). This is UDP-N-acetylmuramoylalanine--D-glutamate ligase from Pelotomaculum thermopropionicum (strain DSM 13744 / JCM 10971 / SI).